The sequence spans 203 residues: E3 ubiquitin-protein ligase RNF152 (203 aa).

The RING-type zinc finger occupies 12 to 55 (CQICFNYYSPRRRPKLLDCKHTCCSVCLQQMRTSQKDVRCPWCR). The tract at residues 106–165 (ISKERTLLPGDMGCRLLPGSQQKSLTVVTIPAEQQPLQGGAPPEAVEEEPDRRGVVKSST) is necessary for interaction with RRAGA. Positions 139-158 (QQPLQGGAPPEAVEEEPDRR) are disordered. Residues 167 to 187 (SGVCTVILVACVLVFLLGIVL) form a helical membrane-spanning segment.

It belongs to the RNF152 family. Interacts with RRAGA (inactive GDP-bound form); stimulated by amino acid starvation. Interacts with SEC16A. Post-translationally, ubiquitinated. Autoubiquitinated in vitro, leading to its degradation by the proteasome.

The protein localises to the lysosome membrane. It catalyses the reaction S-ubiquitinyl-[E2 ubiquitin-conjugating enzyme]-L-cysteine + [acceptor protein]-L-lysine = [E2 ubiquitin-conjugating enzyme]-L-cysteine + N(6)-ubiquitinyl-[acceptor protein]-L-lysine.. Its pathway is protein modification; protein ubiquitination. In terms of biological role, E3 ubiquitin-protein ligase that acts as a negative regulator of mTORC1 signaling by mediating ubiquitination of RagA/RRAGA and RHEB. Catalyzes 'Lys-63'-linked polyubiquitination of RagA/RRAGA in response to amino acid starvation, thereby regulating mTORC1 signaling. Also mediates monoubiquitination of RHEB, promoting its association with the TSC-TBC complex and subsequent inhibition. Also mediates 'Lys-48'-linked polyubiquitination of target proteins and their subsequent targeting to the proteasome for degradation. Induces apoptosis when overexpressed. This Mus musculus (Mouse) protein is E3 ubiquitin-protein ligase RNF152.